Consider the following 226-residue polypeptide: ATP synthase F(0) complex subunit a (226 aa).

Transmembrane regions (helical) follow at residues 5–25 (LFAP…LIII), 68–88 (WSLM…LGML), 97–117 (QLSM…TTGF), 136–156 (FLIP…PVAW), and 189–209 (AFIT…VALI).

The protein belongs to the ATPase A chain family. Component of the ATP synthase complex composed at least of ATP5F1A/subunit alpha, ATP5F1B/subunit beta, ATP5MC1/subunit c (homooctomer), MT-ATP6/subunit a, MT-ATP8/subunit 8, ATP5ME/subunit e, ATP5MF/subunit f, ATP5MG/subunit g, ATP5MK/subunit k, ATP5MJ/subunit j, ATP5F1C/subunit gamma, ATP5F1D/subunit delta, ATP5F1E/subunit epsilon, ATP5PF/subunit F6, ATP5PB/subunit b, ATP5PD/subunit d, ATP5PO/subunit OSCP. ATP synthase complex consists of a soluble F(1) head domain (subunits alpha(3) and beta(3)) - the catalytic core - and a membrane F(0) domain - the membrane proton channel (subunits c, a, 8, e, f, g, k and j). These two domains are linked by a central stalk (subunits gamma, delta, and epsilon) rotating inside the F1 region and a stationary peripheral stalk (subunits F6, b, d, and OSCP). Interacts with DNAJC30; interaction is direct.

The protein resides in the mitochondrion inner membrane. It carries out the reaction H(+)(in) = H(+)(out). Subunit a, of the mitochondrial membrane ATP synthase complex (F(1)F(0) ATP synthase or Complex V) that produces ATP from ADP in the presence of a proton gradient across the membrane which is generated by electron transport complexes of the respiratory chain. ATP synthase complex consist of a soluble F(1) head domain - the catalytic core - and a membrane F(1) domain - the membrane proton channel. These two domains are linked by a central stalk rotating inside the F(1) region and a stationary peripheral stalk. During catalysis, ATP synthesis in the catalytic domain of F(1) is coupled via a rotary mechanism of the central stalk subunits to proton translocation. With the subunit c (ATP5MC1), forms the proton-conducting channel in the F(0) domain, that contains two crucial half-channels (inlet and outlet) that facilitate proton movement from the mitochondrial intermembrane space (IMS) into the matrix. Protons are taken up via the inlet half-channel and released through the outlet half-channel, following a Grotthuss mechanism. The protein is ATP synthase F(0) complex subunit a of Balaenoptera physalus (Fin whale).